A 504-amino-acid polypeptide reads, in one-letter code: D-alanine--D-alanyl carrier protein ligase (504 aa).

152 to 153 (TS) lines the ATP pocket. Position 197 (Asp197) interacts with D-alanine. 292–297 (NTYGPT) is a binding site for ATP. Residue Val301 coordinates D-alanine. ATP is bound by residues Asp383, 394–397 (YNGR), and Lys492. Residue Lys492 coordinates D-alanine.

The protein belongs to the ATP-dependent AMP-binding enzyme family. DltA subfamily.

The protein localises to the cytoplasm. The enzyme catalyses holo-[D-alanyl-carrier protein] + D-alanine + ATP = D-alanyl-[D-alanyl-carrier protein] + AMP + diphosphate. It participates in cell wall biogenesis; lipoteichoic acid biosynthesis. Functionally, catalyzes the first step in the D-alanylation of lipoteichoic acid (LTA), the activation of D-alanine and its transfer onto the D-alanyl carrier protein (Dcp) DltC. In an ATP-dependent two-step reaction, forms a high energy D-alanyl-AMP intermediate, followed by transfer of the D-alanyl residue as a thiol ester to the phosphopantheinyl prosthetic group of the Dcp. D-alanylation of LTA plays an important role in modulating the properties of the cell wall in Gram-positive bacteria, influencing the net charge of the cell wall. The protein is D-alanine--D-alanyl carrier protein ligase of Bacillus thuringiensis (strain Al Hakam).